The chain runs to 317 residues: Peroxidase 22.3 (317 aa).

An N-terminal signal peptide occupies residues 1–25 (MASATNSSLSLMLLVAAAMASVASA). A Pyrrolidone carboxylic acid modification is found at Q26. 2 cysteine pairs are disulfide-bonded: C36/C111 and C69/C74. H67 functions as the Proton acceptor in the catalytic mechanism. Residues D68, V71, G73, D75, and S77 each contribute to the Ca(2+) site. N112 carries N-linked (GlcNAc...) asparagine glycosylation. Intrachain disulfides connect C117-C312 and C196-C221. P159 lines the substrate pocket. N-linked (GlcNAc...) asparagine glycosylation is present at N171. Heme b is bound at residue H189. Ca(2+) is bound at residue T190. Residue N205 is glycosylated (N-linked (GlcNAc...) asparagine). Ca(2+)-binding residues include D236, T239, and D244.

The protein belongs to the peroxidase family. Classical plant (class III) peroxidase subfamily. Heme b is required as a cofactor. The cofactor is Ca(2+).

It is found in the secreted. It carries out the reaction H2O2 + AH2 = A + 2 H2O. In terms of biological role, removal of H(2)O(2), oxidation of toxic reductants, biosynthesis and degradation of lignin, suberization, auxin catabolism, response to environmental stresses such as wounding, pathogen attack and oxidative stress. These functions might be dependent on each isozyme/isoform in each plant tissue. This chain is Peroxidase 22.3, found in Oryza sativa subsp. japonica (Rice).